The sequence spans 68 residues: Large ribosomal subunit protein uL29 (68 aa).

This sequence belongs to the universal ribosomal protein uL29 family.

This Chloroflexus aurantiacus (strain ATCC 29364 / DSM 637 / Y-400-fl) protein is Large ribosomal subunit protein uL29.